The chain runs to 269 residues: Tetrahydromethanopterin S-methyltransferase subunit C (269 aa).

Helical transmembrane passes span 18 to 38 (VLVIGAVLSLIGMYIAHFVPS), 39 to 59 (LAMLLGGLLAAGACVAGANTT), 62 to 82 (VAAYGLGTGVPSIGMVSLGMG), 84 to 104 (ISALAGVLIPSVLAGSVALPF), 106 to 126 (LVLATPIIAAVVAIIVGFIVG), 152 to 172 (ALAILGFCTAFAGGFSADLII), 180 to 200 (IIALAFIAAGMSILHPFNACI), and 222 to 242 (LVFSIAKLDIVSILVAAVFWI).

This sequence belongs to the MtrC family. In terms of assembly, the complex is composed of 8 subunits; MtrA, MtrB, MtrC, MtrD, MtrE, MtrF, MtrG and MtrH.

It is found in the cell membrane. The enzyme catalyses 5-methyl-5,6,7,8-tetrahydromethanopterin + coenzyme M + 2 Na(+)(in) = 5,6,7,8-tetrahydromethanopterin + methyl-coenzyme M + 2 Na(+)(out). The protein operates within one-carbon metabolism; methanogenesis from CO(2); methyl-coenzyme M from 5,10-methylene-5,6,7,8-tetrahydromethanopterin: step 2/2. Its function is as follows. Part of a complex that catalyzes the formation of methyl-coenzyme M and tetrahydromethanopterin from coenzyme M and methyl-tetrahydromethanopterin. This is an energy-conserving, sodium-ion translocating step. The sequence is that of Tetrahydromethanopterin S-methyltransferase subunit C from Methanococcus vannielii (strain ATCC 35089 / DSM 1224 / JCM 13029 / OCM 148 / SB).